We begin with the raw amino-acid sequence, 135 residues long: Small ribosomal subunit protein uS12 (135 aa).

The segment at 1 to 23 (MPTINQLVRKGRHSKTTKSDSPA) is disordered. Asp102 carries the post-translational modification 3-methylthioaspartic acid.

This sequence belongs to the universal ribosomal protein uS12 family. Part of the 30S ribosomal subunit. Contacts proteins S8 and S17. May interact with IF1 in the 30S initiation complex.

In terms of biological role, with S4 and S5 plays an important role in translational accuracy. Its function is as follows. Interacts with and stabilizes bases of the 16S rRNA that are involved in tRNA selection in the A site and with the mRNA backbone. Located at the interface of the 30S and 50S subunits, it traverses the body of the 30S subunit contacting proteins on the other side and probably holding the rRNA structure together. The combined cluster of proteins S8, S12 and S17 appears to hold together the shoulder and platform of the 30S subunit. The sequence is that of Small ribosomal subunit protein uS12 from Lactobacillus gasseri (strain ATCC 33323 / DSM 20243 / BCRC 14619 / CIP 102991 / JCM 1131 / KCTC 3163 / NCIMB 11718 / NCTC 13722 / AM63).